A 217-amino-acid chain; its full sequence is Adenylate kinase (217 aa).

Gly-10 to Thr-15 is a binding site for ATP. The segment at Ser-30 to Val-59 is NMP. AMP-binding positions include Thr-31, Arg-36, Ala-57–Val-59, Gly-85–Arg-88, and Gln-92. The LID stretch occupies residues Gly-126 to Asp-163. Arg-127 is an ATP binding site. Zn(2+) contacts are provided by Cys-130 and Cys-133. Ser-136–Tyr-137 provides a ligand contact to ATP. Zn(2+) is bound by residues Cys-150 and Asp-153. Residues Arg-160 and Arg-171 each contribute to the AMP site. Gln-199 lines the ATP pocket.

It belongs to the adenylate kinase family. As to quaternary structure, monomer.

It is found in the cytoplasm. It carries out the reaction AMP + ATP = 2 ADP. It functions in the pathway purine metabolism; AMP biosynthesis via salvage pathway; AMP from ADP: step 1/1. Catalyzes the reversible transfer of the terminal phosphate group between ATP and AMP. Plays an important role in cellular energy homeostasis and in adenine nucleotide metabolism. The protein is Adenylate kinase of Lysinibacillus sphaericus (strain C3-41).